The sequence spans 436 residues: Serine/threonine-protein kinase 40 (436 aa).

The span at 1–10 shows a compositional bias: basic and acidic residues; sequence MKRRASDRGA. Positions 1–25 are disordered; the sequence is MKRRASDRGAGETSARAKALGSGIS. The Protein kinase domain maps to 35-332; it reads FILGPRLGNS…DVLEALSSII (298 aa). Residues 41–49 and Lys66 contribute to the ATP site; that span reads LGNSPVPSI. Asp197 (proton acceptor) is an active-site residue. The tract at residues 396-417 is disordered; it reads RSWVPKRQSGAGVPPVRRLGHD.

It belongs to the protein kinase superfamily. CAMK Ser/Thr protein kinase family.

Its subcellular location is the nucleus. The protein localises to the cytoplasm. It carries out the reaction L-seryl-[protein] + ATP = O-phospho-L-seryl-[protein] + ADP + H(+). The catalysed reaction is L-threonyl-[protein] + ATP = O-phospho-L-threonyl-[protein] + ADP + H(+). May be a negative regulator of NF-kappa-B and p53-mediated gene transcription. In Bos taurus (Bovine), this protein is Serine/threonine-protein kinase 40 (STK40).